The sequence spans 190 residues: Peptidyl-tRNA hydrolase (190 aa).

Residue Y14 participates in tRNA binding. H19 (proton acceptor) is an active-site residue. TRNA-binding residues include Y64, N66, and N112.

It belongs to the PTH family. Monomer.

The protein resides in the cytoplasm. The enzyme catalyses an N-acyl-L-alpha-aminoacyl-tRNA + H2O = an N-acyl-L-amino acid + a tRNA + H(+). Its function is as follows. Hydrolyzes ribosome-free peptidyl-tRNAs (with 1 or more amino acids incorporated), which drop off the ribosome during protein synthesis, or as a result of ribosome stalling. Functionally, catalyzes the release of premature peptidyl moieties from peptidyl-tRNA molecules trapped in stalled 50S ribosomal subunits, and thus maintains levels of free tRNAs and 50S ribosomes. The protein is Peptidyl-tRNA hydrolase of Chlorobium chlorochromatii (strain CaD3).